A 548-amino-acid polypeptide reads, in one-letter code: Probable bifunctional tRNA threonylcarbamoyladenosine biosynthesis protein (548 aa).

Residues 1–338 (MRILGIEGTA…FRPDEVAVTW (338 aa)) are kae1. The Fe cation site is built by His-122 and His-126. L-threonylcarbamoyladenylate is bound by residues 143–147 (NASGA), Asp-175, Gly-188, Glu-192, and Asn-271. Fe cation is bound at residue Asp-299. In terms of domain architecture, Protein kinase spans 349-548 (RMGGDEVQGA…DDIEGRGRYQ (200 aa)). Residues 355 to 362 (VQGAEATV) and Lys-371 each bind ATP. The segment covering 390 to 404 (ERTRQEARLTSEARR) has biased composition (basic and acidic residues). Residues 390 to 413 (ERTRQEARLTSEARRNGVPTPLVR) form a disordered region. Asp-460 acts as the Proton acceptor; for kinase activity in catalysis.

The protein in the N-terminal section; belongs to the KAE1 / TsaD family. It in the C-terminal section; belongs to the protein kinase superfamily. Tyr protein kinase family. BUD32 subfamily. In terms of assembly, component of the KEOPS complex that consists of Kae1, Bud32, Cgi121 and Pcc1; the whole complex dimerizes. It depends on Fe(2+) as a cofactor.

It localises to the cytoplasm. The catalysed reaction is L-seryl-[protein] + ATP = O-phospho-L-seryl-[protein] + ADP + H(+). It catalyses the reaction L-threonyl-[protein] + ATP = O-phospho-L-threonyl-[protein] + ADP + H(+). It carries out the reaction L-threonylcarbamoyladenylate + adenosine(37) in tRNA = N(6)-L-threonylcarbamoyladenosine(37) in tRNA + AMP + H(+). Its function is as follows. Required for the formation of a threonylcarbamoyl group on adenosine at position 37 (t(6)A37) in tRNAs that read codons beginning with adenine. Is a component of the KEOPS complex that is probably involved in the transfer of the threonylcarbamoyl moiety of threonylcarbamoyl-AMP (TC-AMP) to the N6 group of A37. The Kae1 domain likely plays a direct catalytic role in this reaction. The Bud32 domain probably displays kinase activity that regulates Kae1 function. In Haloarcula marismortui (strain ATCC 43049 / DSM 3752 / JCM 8966 / VKM B-1809) (Halobacterium marismortui), this protein is Probable bifunctional tRNA threonylcarbamoyladenosine biosynthesis protein.